Consider the following 350-residue polypeptide: MRIPNVFLSYLRQVAVDGTLSSCSGVKSRKPVIAYGFDDSQDSLVDENDEKILEPFGYYRHLLKGKSARTVLMHCFNAFLGLPEDWVIGVTKAIEDLHNASLLIDDIEDESALRRGSPAAHMKYGIALTMNAGNLVYFTVLQDVYDLGMKTGGTQVANAMARIYTEEMIELHRGQGIEIWWRDQRSPPSVDQYIHMLEQKTGGLLRLGVRLLQCHPGVNNRADLSDIALRIGVYYQLRDDYINLMSTSYHDERGFAEDMTEGKYTFPMLHSLKRSPDSGLREILDLKPADIALKKKAIAIMQDTGSLVATRNLLGAVKNDLSGLVAEQRGDDYAMSAGLERFLEKLYIAE.

Residues Lys66, Arg69, and His98 each contribute to the isopentenyl diphosphate site. Residues Asp105 and Asp109 each contribute to the Mg(2+) site. Residue Arg114 participates in dimethylallyl diphosphate binding. Arg115 provides a ligand contact to isopentenyl diphosphate. 5 residues coordinate dimethylallyl diphosphate: Lys200, Thr201, Gln236, Asn243, and Lys263.

This sequence belongs to the FPP/GGPP synthase family. The cofactor is Mg(2+).

The catalysed reaction is isopentenyl diphosphate + dimethylallyl diphosphate = (2E)-geranyl diphosphate + diphosphate. The enzyme catalyses isopentenyl diphosphate + (2E)-geranyl diphosphate = (2E,6E)-farnesyl diphosphate + diphosphate. It carries out the reaction isopentenyl diphosphate + (2E,6E)-farnesyl diphosphate = (2E,6E,10E)-geranylgeranyl diphosphate + diphosphate. Its pathway is secondary metabolite biosynthesis; terpenoid biosynthesis. Its function is as follows. Geranylgeranyl pyrophosphate synthase; part of the gene cluster that mediates the biosynthesis of pleuromutilin, a tricyclic diterpene showing antibacterial properties. The geranylgeranyl diphosphate (GGPP) synthase catalyzes the first step in pleuromutilin biosynthesis. GGPP is then substrate of the premutilin synthase (PS) to yield premutilin. Premutilin synthase is a bifunctional enzyme composed of the fusion of a class II diterpene cyclase (DTC) and a class I diterpene synthase (DTS), with the corresponding domains and active sites containing characteristic aspartate-rich motifs. GGPP is first converted to mutildienyl-diphosphate (MPP) at the class II DTC site. MPP is subsequently further cyclized at the class I DTS site, followed by a 1,5-hydride shift and addition of water prior to terminating deprotonation, to yield premutilin. In addition to the aforementioned GGPP synthase and bifunctional diterpene synthase, the cluster also contains three cytochrome P450 monooxygenases, a short-chain alcohol dehydrogenase, and an acyltransferase, involved in the conversion of premutilin to pleuromutilin. The cytochrome P450 monooxygenases P450-1 and P450-2 hydroxylate premutilin at C-11 and C-3, respectively, producing 11-hydroxypremutilin and 3-hydroxypremutilin. The combination of the actions of both ple5 and ple6 leads to the production of 3,11-dihydroxypremutilin. The short chain dehydrogenase SDR further converts 3,11-dihydroxypremutilin into mutilin. The acetyltransferase ATF then acetylates mutilin to produce 14-O-acetylmutilin. Finally, the cytochrome P450 monooxygenase P450-3 catalyzes hydroxylation on the alpha position of the acetyl side chain of 14-O-acetylmutilin to yield pleuromutilin. In Clitopilus passeckerianus (Pleurotus passeckerianus), this protein is Geranylgeranyl pyrophosphate synthase.